We begin with the raw amino-acid sequence, 182 residues long: Bis(5'-nucleosyl)-tetraphosphatase [asymmetrical] (182 aa).

An HIT domain is found at 3 to 110 (KQLYFSKFPV…IPRKKADFSE (108 aa)). Substrate is bound by residues Asn-28, Gln-84, and 90 to 93 (GQTV). The short motif at 95-99 (HVHVH) is the Histidine triad motif element. His-97 (tele-AMP-histidine intermediate) is an active-site residue. Substrate is bound at residue His-99. The tract at residues 135-161 (RYAGDERPPTSMRQAIPKDEDRKPRTL) is disordered. Residues 150–161 (IPKDEDRKPRTL) are compositionally biased toward basic and acidic residues.

It carries out the reaction P(1),P(4)-bis(5'-guanosyl) tetraphosphate + H2O = GMP + GTP + 2 H(+). Asymmetrically hydrolyzes Ap4A to yield AMP and ATP. This is Bis(5'-nucleosyl)-tetraphosphatase [asymmetrical] (aph1) from Schizosaccharomyces pombe (strain 972 / ATCC 24843) (Fission yeast).